We begin with the raw amino-acid sequence, 546 residues long: Chaperonin GroEL (546 aa).

ATP contacts are provided by residues 29 to 32, Lys-50, 86 to 90, Gly-414, 477 to 479, and Asp-493; these read TLGP, DGTTT, and NAL.

This sequence belongs to the chaperonin (HSP60) family. In terms of assembly, forms a cylinder of 14 subunits composed of two heptameric rings stacked back-to-back. Interacts with the co-chaperonin GroES.

The protein localises to the cytoplasm. It carries out the reaction ATP + H2O + a folded polypeptide = ADP + phosphate + an unfolded polypeptide.. In terms of biological role, together with its co-chaperonin GroES, plays an essential role in assisting protein folding. The GroEL-GroES system forms a nano-cage that allows encapsulation of the non-native substrate proteins and provides a physical environment optimized to promote and accelerate protein folding. The chain is Chaperonin GroEL from Leptospira interrogans serogroup Icterohaemorrhagiae serovar copenhageni (strain Fiocruz L1-130).